A 232-amino-acid polypeptide reads, in one-letter code: Fibrillarin-like rRNA/tRNA 2'-O-methyltransferase (232 aa).

S-adenosyl-L-methionine-binding positions include 89 to 90 (TT), 108 to 109 (EF), 133 to 134 (DA), and 153 to 156 (DIAQ).

It belongs to the methyltransferase superfamily. Fibrillarin family. In terms of assembly, interacts with nop5. Component of box C/D small ribonucleoprotein (sRNP) particles that contain rpl7ae, FlpA and nop5, plus a guide RNA. These sRNP particles form homodimers, giving rise to an asymmetric holoenzyme.

Involved in pre-rRNA and tRNA processing. Utilizes the methyl donor S-adenosyl-L-methionine to catalyze the site-specific 2'-hydroxyl methylation of ribose moieties in rRNA and tRNA. Site specificity is provided by a guide RNA that base pairs with the substrate. Methylation occurs at a characteristic distance from the sequence involved in base pairing with the guide RNA. This chain is Fibrillarin-like rRNA/tRNA 2'-O-methyltransferase, found in Saccharolobus solfataricus (strain ATCC 35092 / DSM 1617 / JCM 11322 / P2) (Sulfolobus solfataricus).